The chain runs to 787 residues: MGIELVCLFLLLLGRNDHVQGGCAWSGAETCSDCLLTGPHCAWCSQENFTHLSGAGERCDTPENLLAKGCQLPFIENPVSQVEILQNKPLSVGRQKNSSDIVQIAPQSLVLKLRPGGEQTLQVQVRQTEDYPVDLYYLMDLSASMDDDLNTIKELGSRLAKEMSKLTSNFRLGFGSFVEKPVSPFMKTTPEEITNPCSSIPYFCLPTFGFKHILPLTDDAERFNEIVRKQKISANIDTPEGGFDAIMQAAVCKEKIGWRNDSLHLLVFVSDADSHFGMDSKLAGIVIPNDGLCHLDNRNEYSMSTVLEYPTIGQLIDKLVQNNVLLIFAVTQEQVHLYENYAKLIPGATVGLLQKDSGNILQLIISAYEELRSEVELEVLGDTEGLNLSFTALCSNGILFPHQKKCSHMKVGDTASFNVSVSITNCEKRSRKLIIKPVGLGDTLEILVSAECDCDCQREVEANSSKCHHGNGSFQCGVCACNPGHMGPRCECGEDMVSTDSCKESPGHPSCSGRGDCYCGQCVCHLSPYGSIYGPYCQCDNFSCLRHKGLLCGDNGDCDCGECVCRDGWTGEYCNCTTSRDACASEDGVLCSGRGDCVCGKCVCRNPGASGPTCERCPTCGDPCNSRRSCIECYLSADGQAQEECEDKCKATGATISEEEFSKDTSVPCSLQGENECLITFLITADNEGKTIIHNISEKDCPKPPNIPMIMLGVSLAILLIGVVLLCIWKLLVSFHDRKEVAKFEAERSKAKWQTGTNPLYRGSTSTFKNVTYKHREKHKVGLSSDG.

The signal sequence occupies residues 1 to 21 (MGIELVCLFLLLLGRNDHVQG). In terms of domain architecture, PSI spans 22–71 (GCAWSGAETCSDCLLTGPHCAWCSQENFTHLSGAGERCDTPENLLAKGCQ). Residues 22-708 (GCAWSGAETC…KDCPKPPNIP (687 aa)) lie on the Extracellular side of the membrane. Intrachain disulfides connect C23–C41, C31–C454, C34–C59, C44–C70, C197–C204, C252–C293, C394–C406, C426–C452, C456–C476, C467–C479, C481–C490, C492–C519, C502–C517, C511–C522, C524–C537, C539–C560, C544–C558, C552–C563, and C565–C574. 2 N-linked (GlcNAc...) asparagine glycosylation sites follow: N48 and N97. Residues 131–371 (YPVDLYYLMD…QLIISAYEEL (241 aa)) form the VWFA domain. Mg(2+)-binding residues include D140, S142, and S144. 4 residues coordinate Ca(2+): S144, D147, D148, and E179. Ca(2+) is bound by residues N235, D237, P239, and E240. E240 provides a ligand contact to Mg(2+). N-linked (GlcNAc...) asparagine glycosylation occurs at N260. Positions 271 and 355 each coordinate Ca(2+). N-linked (GlcNAc...) asparagine glycosylation is present at N387. Residue N418 is glycosylated (N-linked (GlcNAc...) asparagine). 4 consecutive I-EGF domains span residues 456 to 491 (CQREVEANSSKCHHGNGSFQCGVCACNPGHMGPRCE), 492 to 538 (CGED…PYCQ), 539 to 575 (CDNFSCLRHKGLLCGDNGDCDCGECVCRDGWTGEYCN), and 576 to 615 (CTTSRDACASEDGVLCSGRGDCVCGKCVCRNPGASGPTCE). N-linked (GlcNAc...) asparagine glycosylation is found at N463 and N471. The N-linked (GlcNAc...) asparagine glycan is linked to N541. N575 carries an N-linked (GlcNAc...) asparagine glycan. Cystine bridges form between C576–C599, C583–C597, C591–C602, C604–C614, C617–C620, C624–C669, C630–C649, C633–C645, and C677–C701. N695 is a glycosylation site (N-linked (GlcNAc...) asparagine). Residues 709–729 (MIMLGVSLAILLIGVVLLCIW) form a helical membrane-spanning segment. The tract at residues 730 to 757 (KLLVSFHDRKEVAKFEAERSKAKWQTGT) is interaction with HAX1. Residues 730–787 (KLLVSFHDRKEVAKFEAERSKAKWQTGTNPLYRGSTSTFKNVTYKHREKHKVGLSSDG) lie on the Cytoplasmic side of the membrane.

This sequence belongs to the integrin beta chain family. As to quaternary structure, heterodimer of an alpha and a beta subunit. Interacts with FLNB. Interacts with HAX1. ITGAV:ITGB6 interacts with FBN1. ITGAV:ITGB6 interacts with TGFB1.

It localises to the cell membrane. The protein localises to the cell junction. The protein resides in the focal adhesion. In terms of biological role, integrin alpha-V:beta-6 (ITGAV:ITGB6) is a receptor for fibronectin and cytotactin. It recognizes the sequence R-G-D in its ligands. ITGAV:ITGB6 acts as a receptor for fibrillin-1 (FBN1) and mediates R-G-D-dependent cell adhesion to FBN1. Integrin alpha-V:beta-6 (ITGAV:ITGB6) mediates R-G-D-dependent release of transforming growth factor beta-1 (TGF-beta-1) from regulatory Latency-associated peptide (LAP), thereby playing a key role in TGF-beta-1 activation. The chain is Integrin beta-6 (Itgb6) from Rattus norvegicus (Rat).